Reading from the N-terminus, the 212-residue chain is Ribonuclease HII (212 aa).

In terms of domain architecture, RNase H type-2 spans 1–206 (MILVGIDEAG…LQDIAPNYYI (206 aa)). Positions 7, 8, and 104 each coordinate a divalent metal cation.

This sequence belongs to the RNase HII family. The cofactor is Mn(2+). Mg(2+) is required as a cofactor.

It is found in the cytoplasm. It catalyses the reaction Endonucleolytic cleavage to 5'-phosphomonoester.. Endonuclease that specifically degrades the RNA of RNA-DNA hybrids. The chain is Ribonuclease HII from Sulfolobus acidocaldarius (strain ATCC 33909 / DSM 639 / JCM 8929 / NBRC 15157 / NCIMB 11770).